A 315-amino-acid polypeptide reads, in one-letter code: MAPPRPDYTFTHEHLLGIEGLHPLDIGHILDLADSYAEKTRAGVRPDPVLTGKTVVNLFFETSTRTMSSFEIAARRLGAHVISMPIANSSVKKGETLIDTAMTLNAMKPDALVIRHSASGGAKLLSRKVDCAVINAGDGTHEHPTQALLDLLTIRRVKNRIEGLKVVICGDIAHSRVARSTTMALHLMGARVHLCGPKTLIPPGTETWGAESAGTDFDKVLKGADVVMMLRLQLERMNGSFLPSRREYFRYFGLTAERLALAKPNATVMHPGPMNRGVEIESTIADGPSSVITQQVEMGVAVREAVLHLLAGGKS.

The carbamoyl phosphate site is built by Arg-65 and Thr-66. Lys-93 provides a ligand contact to L-aspartate. Positions 115, 143, and 146 each coordinate carbamoyl phosphate. Positions 176 and 231 each coordinate L-aspartate. Carbamoyl phosphate-binding residues include Gly-272 and Pro-273.

This sequence belongs to the aspartate/ornithine carbamoyltransferase superfamily. ATCase family. Heterododecamer (2C3:3R2) of six catalytic PyrB chains organized as two trimers (C3), and six regulatory PyrI chains organized as three dimers (R2).

The catalysed reaction is carbamoyl phosphate + L-aspartate = N-carbamoyl-L-aspartate + phosphate + H(+). Its pathway is pyrimidine metabolism; UMP biosynthesis via de novo pathway; (S)-dihydroorotate from bicarbonate: step 2/3. Functionally, catalyzes the condensation of carbamoyl phosphate and aspartate to form carbamoyl aspartate and inorganic phosphate, the committed step in the de novo pyrimidine nucleotide biosynthesis pathway. In Hyphomonas neptunium (strain ATCC 15444), this protein is Aspartate carbamoyltransferase catalytic subunit.